Reading from the N-terminus, the 1074-residue chain is Telomerase reverse transcriptase (1074 aa).

Residues Asp240–Lys265 form a disordered region. Residues Gly253–Pro262 show a composition bias toward polar residues. A TFLY; involved in RNA binding motif is present at residues Thr300–Tyr305. Interaction with RNA template stretches follow at residues Leu355–Phe360 and Trp461–Tyr486. Residues Thr552 to Leu877 form the Reverse transcriptase domain. 3 residues coordinate Mg(2+): Asp649, Asp810, and Asp811.

It belongs to the reverse transcriptase family. Telomerase subfamily. Catalytic subunit of the telomerase holoenzyme complex composed minimally of TERT and the telomerase RNA template component (TERC). As to expression, detected at highest levels in gill, ovary and testis, and at lower levels in brain, eye, heart, skin, spleen and stomach.

The protein resides in the nucleus. The protein localises to the chromosome. It localises to the telomere. The catalysed reaction is DNA(n) + a 2'-deoxyribonucleoside 5'-triphosphate = DNA(n+1) + diphosphate. Telomerase is a ribonucleoprotein enzyme essential for the replication of chromosome termini in most eukaryotes. It elongates telomeres. It is a reverse transcriptase that adds simple sequence repeats to chromosome ends by copying a template sequence within the RNA component of the enzyme. In Takifugu rubripes (Japanese pufferfish), this protein is Telomerase reverse transcriptase.